The following is a 1810-amino-acid chain: Trinucleotide repeat-containing gene 6B protein (1810 aa).

A compositionally biased stretch (acidic residues) spans 1–22 (MQTNEGEVEEESSSQVEQEDFV). 4 disordered regions span residues 1–221 (MQTN…PNPI), 235–1080 (EEWP…KKQM), 1141–1196 (MRKD…SSPG), and 1293–1329 (ALQQ…NMVP). The stretch at 33 to 75 (GEESKQEKEQEREEQLMEDKKRKKEDKKKKEATQKVTEQKTKV) forms a coiled coil. Composition is skewed to basic and acidic residues over residues 34–52 (EESK…MEDK) and 60–77 (KKKE…KVPE). Residues 37-1028 (KQEKEQEREE…AMKPNSKSMQ (992 aa)) form an interaction with argonaute proteins region. Positions 88 to 106 (AASPIGSSPSPPVNGGNNA) are enriched in low complexity. Positions 123–139 (MPREVPPRFRCQQDHKV) are enriched in basic and acidic residues. The segment covering 165–174 (APGANPNNNA) has biased composition (low complexity). Over residues 180–190 (LLQSESGTAPE) the composition is skewed to polar residues. 2 stretches are compositionally biased toward low complexity: residues 207-220 (GPGA…SPNP) and 248-260 (SSEN…SASN). Composition is skewed to polar residues over residues 261–290 (PGSE…SGNE) and 306–327 (QPPN…TSGQ). 3 stretches are compositionally biased toward low complexity: residues 335-346 (GFSNFNPNSNPS), 363-380 (ETES…GQAS), and 416-425 (NSLNLSSPNP). A compositionally biased stretch (polar residues) spans 438–451 (GNTSRSTDAPSQST). Residues 475–486 (SGQSNSGNNGNN) show a composition bias toward low complexity. Polar residues-rich tracts occupy residues 504–528 (GSKS…PQDN), 564–575 (GPNQPNSSTGAW), 611–623 (TGSN…SDSH), and 655–667 (LSNT…QIKQ). Over residues 675–688 (EVPRPEGKSDKGTE) the composition is skewed to basic and acidic residues. Polar residues-rich tracts occupy residues 774–783 (QPNQGWTSGK) and 793–804 (VKNNNWESSANK). A compositionally biased stretch (gly residues) spans 809–824 (WGEGGQNEIGTWGNGG). Over residues 846–857 (TGRQPNSWNKQH) the composition is skewed to polar residues. The residue at position 913 (Ser913) is a Phosphoserine. 5 stretches are compositionally biased toward polar residues: residues 934–950 (NSYN…NSQG), 964–975 (TGKSASVWSKST), 1004–1027 (ASTT…SKSM), 1057–1072 (TAGS…SASW), and 1175–1195 (GNST…SSSP). Residues 1191–1700 (LSSSPGLRAQ…LAEFATEDEV (510 aa)) form a silencing domain; interaction with CNOT1 and PAN3 region. The span at 1295-1307 (QQQQQQQQQQQRQ) shows a compositional bias: low complexity. Ser1409 is subject to Phosphoserine. The residue at position 1426 (Thr1426) is a Phosphothreonine. Ser1438 carries the phosphoserine modification. The residue at position 1441 (Thr1441) is a Phosphothreonine. A PABPC1-interacting motif-2 (PAM2) region spans residues 1449–1467 (SNASWPPEFQPGVPWKGIQ). A disordered region spans residues 1568–1619 (SSRNTTPLTRPPPGLTNPKPASPWSSTAPRSVRGWGTQDSRIASASTWSDGG). Residues 1604–1617 (TQDSRIASASTWSD) are compositionally biased toward polar residues. The region spanning 1625–1697 (YWLVLHNLTP…TTILAEFATE (73 aa)) is the RRM domain. Disordered stretches follow at residues 1706–1740 (QAQP…GPAL) and 1786–1810 (EDPH…SDSI). Residues 1722-1733 (GWQSLETSQNQA) are compositionally biased toward polar residues. Low complexity predominate over residues 1792–1801 (GSPAPLLPGD). 2 positions are modified to phosphoserine: Ser1793 and Ser1809.

The protein belongs to the GW182 family. In terms of assembly, interacts with AGO1, AGO2, AGO3 and AGO4. Interacts with CNOT1; the interaction mediates the association with the CCR4-NOT complex. Interacts with PAN3; the interaction mediates the association with the PAN complex. Interacts with MOV10; the interaction is direct and RNA-dependent.

The protein resides in the cytoplasm. It is found in the P-body. Its function is as follows. Plays a role in RNA-mediated gene silencing by both micro-RNAs (miRNAs) and short interfering RNAs (siRNAs). Required for miRNA-dependent translational repression and siRNA-dependent endonucleolytic cleavage of complementary mRNAs by argonaute family proteins. As scaffolding protein associates with argonaute proteins bound to partially complementary mRNAs and simultaneously can recruit CCR4-NOT and PAN deadenylase complexes. The polypeptide is Trinucleotide repeat-containing gene 6B protein (Tnrc6b) (Mus musculus (Mouse)).